The chain runs to 701 residues: Ubiquitin thioesterase zranb1 (701 aa).

The RanBP2-type 1 zinc finger occupies 3-33 (EHGIKWACEYCTYENWPSAIKCTMCRAPRPS). Cysteine 10, cysteine 13, cysteine 24, and cysteine 27 together coordinate Zn(2+). Positions 38–59 (TEEPFKNSTPDVGSMERESGSP) are disordered. The segment at 79 to 108 (TSTKWSCHMCTYLNWPRAIRCTQCLSQRRT) adopts a RanBP2-type 2 zinc-finger fold. Positions 85, 88, 99, and 102 each coordinate Zn(2+). The segment at 108–129 (TRSPTESPQSSGSSLRAIPSPI) is disordered. A compositionally biased stretch (low complexity) spans 111–121 (PTESPQSSGSS). The RanBP2-type 3 zinc-finger motif lies at 143 to 173 (IKGQHWTCSACTYENCAKAKKCVVCDHPTPN). Cysteine 150, cysteine 153, cysteine 164, and cysteine 167 together coordinate Zn(2+). The interval 198-220 (WRGGCSSSNSQRRSPPTSKRDSD) is disordered. The segment covering 202–214 (CSSSNSQRRSPPT) has biased composition (polar residues). ANK repeat units follow at residues 253–283 (RKTD…SGGD) and 306–333 (YTLV…QHAA). An OTU domain is found at 425-585 (LYALWNRTAG…RGHFSALVAM (161 aa)). Cysteine 436 acts as the Nucleophile in catalysis. Catalysis depends on histidine 578, which acts as the Proton acceptor.

It belongs to the peptidase C64 family.

Its subcellular location is the cytoplasm. It localises to the nucleus. The catalysed reaction is Thiol-dependent hydrolysis of ester, thioester, amide, peptide and isopeptide bonds formed by the C-terminal Gly of ubiquitin (a 76-residue protein attached to proteins as an intracellular targeting signal).. In terms of biological role, ubiquitin thioesterase, which specifically hydrolyzes 'Lys-29'-linked and 'Lys-33'-linked diubiquitin. Also cleaves 'Lys-63'-linked chains, but with 40-fold less efficiency compared to 'Lys-29'-linked ones. Positive regulator of the Wnt signaling pathway that deubiquitinates apc protein, a negative regulator of Wnt-mediated transcription. Acts as a regulator of autophagy by mediating deubiquitination of pik3c3/vps34, thereby promoting autophagosome maturation. Plays a role in the regulation of cell morphology and cytoskeletal organization. Required in the stress fiber dynamics and cell migration. The sequence is that of Ubiquitin thioesterase zranb1 (zranb1) from Xenopus tropicalis (Western clawed frog).